The chain runs to 544 residues: Chaperonin GroEL 1 (544 aa).

Residues 30–33 (TLGP), Lys51, 87–91 (DGTTT), Gly415, 481–483 (DAL), and Asp497 each bind ATP.

Belongs to the chaperonin (HSP60) family. Forms a cylinder of 14 subunits composed of two heptameric rings stacked back-to-back. Interacts with the co-chaperonin GroES.

Its subcellular location is the cytoplasm. It carries out the reaction ATP + H2O + a folded polypeptide = ADP + phosphate + an unfolded polypeptide.. Functionally, together with its co-chaperonin GroES, plays an essential role in assisting protein folding. The GroEL-GroES system forms a nano-cage that allows encapsulation of the non-native substrate proteins and provides a physical environment optimized to promote and accelerate protein folding. The chain is Chaperonin GroEL 1 from Chlamydia pneumoniae (Chlamydophila pneumoniae).